The sequence spans 120 residues: Large ribosomal subunit protein uL18 (120 aa).

This sequence belongs to the universal ribosomal protein uL18 family. Part of the 50S ribosomal subunit; part of the 5S rRNA/L5/L18/L25 subcomplex. Contacts the 5S and 23S rRNAs.

This is one of the proteins that bind and probably mediate the attachment of the 5S RNA into the large ribosomal subunit, where it forms part of the central protuberance. The polypeptide is Large ribosomal subunit protein uL18 (Bacillus pumilus (strain SAFR-032)).